A 542-amino-acid polypeptide reads, in one-letter code: CTP synthase (542 aa).

Residues 1–265 (MARYVFITGG…DDEVLAAFGI (265 aa)) form an amidoligase domain region. Residue Ser13 participates in CTP binding. Residue Ser13 coordinates UTP. ATP contacts are provided by residues 14–19 (SLGKGI) and Asp71. Asp71 and Glu139 together coordinate Mg(2+). Residues 146–148 (DIE), 186–191 (KTKPTQ), and Lys222 contribute to the CTP site. Residues 186-191 (KTKPTQ) and Lys222 each bind UTP. A Glutamine amidotransferase type-1 domain is found at 291–541 (TIAIVGKYTG…IEAATEQSRL (251 aa)). An L-glutamine-binding site is contributed by Gly353. The active-site Nucleophile; for glutamine hydrolysis is Cys380. L-glutamine contacts are provided by residues 381-384 (FGMQ), Glu404, and Arg469. Residues His514 and Glu516 contribute to the active site.

The protein belongs to the CTP synthase family. As to quaternary structure, homotetramer.

It catalyses the reaction UTP + L-glutamine + ATP + H2O = CTP + L-glutamate + ADP + phosphate + 2 H(+). It carries out the reaction L-glutamine + H2O = L-glutamate + NH4(+). The enzyme catalyses UTP + NH4(+) + ATP = CTP + ADP + phosphate + 2 H(+). It functions in the pathway pyrimidine metabolism; CTP biosynthesis via de novo pathway; CTP from UDP: step 2/2. Allosterically activated by GTP, when glutamine is the substrate; GTP has no effect on the reaction when ammonia is the substrate. The allosteric effector GTP functions by stabilizing the protein conformation that binds the tetrahedral intermediate(s) formed during glutamine hydrolysis. Inhibited by the product CTP, via allosteric rather than competitive inhibition. Its function is as follows. Catalyzes the ATP-dependent amination of UTP to CTP with either L-glutamine or ammonia as the source of nitrogen. Regulates intracellular CTP levels through interactions with the four ribonucleotide triphosphates. This Rhizobium leguminosarum bv. trifolii (strain WSM2304) protein is CTP synthase.